Here is a 249-residue protein sequence, read N- to C-terminus: Fatty acid elongase 5 (249 aa).

3 helical membrane passes run 23 to 43 (VFVNYPVLIGCHIGYLVVIVL), 68 to 88 (VALSLVMAINLGQFLVYGVFN), and 100 to 120 (WIFVHYATKFLDMFDTYFIVL). Residues 131-135 (HIYHH) carry the HxxHH motif motif. Catalysis depends on H134, which acts as the Nucleophile. The next 4 membrane-spanning stretches (helical) occupy residues 138-158 (IGFIWGLLLHHGVANGTAFFG), 159-179 (AWINSAVHALMYFHYLYTSLG), 193-213 (MIQFALCILHAVLAVVAHSPI), and 217-236 (WAVLQLCYHLTLLYLFMRFY).

The protein belongs to the ELO family.

It localises to the membrane. It catalyses the reaction an acyl-CoA + malonyl-CoA + H(+) = a 3-oxoacyl-CoA + CO2 + CoA. It functions in the pathway lipid metabolism; polyunsaturated fatty acid biosynthesis. In terms of biological role, involved in the synthesis of fatty acids. Elongates C20 polyunsaturated fatty acids (PUFAs) with a preference for n-6 PUFAs. The chain is Fatty acid elongase 5 from Leishmania major.